The chain runs to 591 residues: L-fucose isomerase (591 aa).

Active-site proton acceptor residues include Glu-338 and Asp-362. Residues Glu-338, Asp-362, and His-529 each coordinate Mn(2+).

This sequence belongs to the L-fucose isomerase family. Requires Mn(2+) as cofactor.

The protein resides in the cytoplasm. The enzyme catalyses L-fucose = L-fuculose. Its pathway is carbohydrate degradation; L-fucose degradation; L-lactaldehyde and glycerone phosphate from L-fucose: step 1/3. Its function is as follows. Converts the aldose L-fucose into the corresponding ketose L-fuculose. The protein is L-fucose isomerase of Bacteroides thetaiotaomicron (strain ATCC 29148 / DSM 2079 / JCM 5827 / CCUG 10774 / NCTC 10582 / VPI-5482 / E50).